We begin with the raw amino-acid sequence, 660 residues long: Bifunctional polymyxin resistance protein ArnA (660 aa).

Residues 1–304 are formyltransferase ArnAFT; that stretch reads MKTVVFAYHD…TLGLVQGSRL (304 aa). 86–88 provides a ligand contact to (6R)-10-formyltetrahydrofolate; that stretch reads HLI. Catalysis depends on histidine 104, which acts as the Proton donor; for formyltransferase activity. (6R)-10-formyltetrahydrofolate is bound by residues arginine 114 and 136–140; that span reads VKRAD. The interval 314–660 is dehydrogenase ArnADH; that stretch reads RRTRVLILGV…RTVDLTDKPS (347 aa). NAD(+) is bound by residues aspartate 347 and 368–369; that span reads DI. UDP-alpha-D-glucuronate is bound by residues alanine 393, tyrosine 398, and 432-433; that span reads TS. Residue glutamate 434 is the Proton acceptor; for decarboxylase activity of the active site. Residues arginine 460, asparagine 492, 526 to 535, and tyrosine 613 each bind UDP-alpha-D-glucuronate; that span reads KLIDGGKQKR. Arginine 619 functions as the Proton donor; for decarboxylase activity in the catalytic mechanism.

This sequence in the N-terminal section; belongs to the Fmt family. UDP-L-Ara4N formyltransferase subfamily. In the C-terminal section; belongs to the NAD(P)-dependent epimerase/dehydratase family. UDP-glucuronic acid decarboxylase subfamily. In terms of assembly, homohexamer, formed by a dimer of trimers.

The enzyme catalyses UDP-alpha-D-glucuronate + NAD(+) = UDP-beta-L-threo-pentopyranos-4-ulose + CO2 + NADH. It carries out the reaction UDP-4-amino-4-deoxy-beta-L-arabinose + (6R)-10-formyltetrahydrofolate = UDP-4-deoxy-4-formamido-beta-L-arabinose + (6S)-5,6,7,8-tetrahydrofolate + H(+). It functions in the pathway nucleotide-sugar biosynthesis; UDP-4-deoxy-4-formamido-beta-L-arabinose biosynthesis; UDP-4-deoxy-4-formamido-beta-L-arabinose from UDP-alpha-D-glucuronate: step 1/3. The protein operates within nucleotide-sugar biosynthesis; UDP-4-deoxy-4-formamido-beta-L-arabinose biosynthesis; UDP-4-deoxy-4-formamido-beta-L-arabinose from UDP-alpha-D-glucuronate: step 3/3. Its pathway is bacterial outer membrane biogenesis; lipopolysaccharide biosynthesis. In terms of biological role, bifunctional enzyme that catalyzes the oxidative decarboxylation of UDP-glucuronic acid (UDP-GlcUA) to UDP-4-keto-arabinose (UDP-Ara4O) and the addition of a formyl group to UDP-4-amino-4-deoxy-L-arabinose (UDP-L-Ara4N) to form UDP-L-4-formamido-arabinose (UDP-L-Ara4FN). The modified arabinose is attached to lipid A and is required for resistance to polymyxin and cationic antimicrobial peptides. The protein is Bifunctional polymyxin resistance protein ArnA of Escherichia coli O157:H7.